We begin with the raw amino-acid sequence, 153 residues long: uncharacterized protein (153 aa).

Residues 1–22 (MKLLKKGTTVLFVMIMAVMLVA) form the signal peptide. C23 is lipidated: N-palmitoyl cysteine. The S-diacylglycerol cysteine moiety is linked to residue C23. The tract at residues 121-153 (LPGMASTGDVSKGISMKESEKMLKSQGFKEVEK) is disordered. Over residues 135-153 (SMKESEKMLKSQGFKEVEK) the composition is skewed to basic and acidic residues.

It to E.coli YehR.

It localises to the cell membrane. This is an uncharacterized protein from Listeria innocua serovar 6a (strain ATCC BAA-680 / CLIP 11262).